The following is a 275-amino-acid chain: Chlorophyll a-b binding protein 3, chloroplastic (275 aa).

Residue Trp-58 participates in chlorophyll b binding. Phe-78, Ser-84, and Glu-102 together coordinate chlorophyll a. Residues Arg-107, Ile-142, Glu-169, and Arg-172 each contribute to the chlorophyll b site. Chlorophyll a-binding residues include Lys-226, Glu-227, Asn-230, Arg-232, Gln-244, and His-259. Residues 233-253 (LAMLAILGYFIQGLVTGVGPY) form a helical membrane-spanning segment.

It belongs to the light-harvesting chlorophyll a/b-binding (LHC) protein family. In terms of assembly, the LHC complex consists of chlorophyll a-b binding proteins. It depends on Binds at least 14 chlorophylls (8 Chl-a and 6 Chl-b) and carotenoids such as lutein and neoxanthin. as a cofactor. Post-translationally, photoregulated by reversible phosphorylation of its threonine residues.

It is found in the plastid. It localises to the chloroplast thylakoid membrane. In terms of biological role, the light-harvesting complex (LHC) functions as a light receptor, it captures and delivers excitation energy to photosystems with which it is closely associated. Functionally, may channel protons produced in the catalytic Mn center of water oxidation into the thylakoid lumen. The protein is Chlorophyll a-b binding protein 3, chloroplastic of Pisum sativum (Garden pea).